Reading from the N-terminus, the 804-residue chain is Endoplasmin (804 aa).

The first 21 residues, 1 to 21 (MRALWVLGLCCVLLTFGSVRA), serve as a signal peptide directing secretion. Residues 42-44 (SRT) carry the SRT pseudosubstrate motif motif. Asparagine 62 carries an N-linked (GlcNAc...) asparagine glycan. At serine 64 the chain carries Phosphoserine. N-linked (GlcNAc...) asparagine glycosylation occurs at asparagine 107. The ATP site is built by asparagine 107, aspartate 149, and asparagine 162. Position 168 is an N6-(2-hydroxyisobutyryl)lysine (lysine 168). Phosphoserine is present on serine 172. Phenylalanine 199 contributes to the ATP binding site. N-linked (GlcNAc...) asparagine glycosylation is present at asparagine 217. The segment at 288 to 323 (TVEEPMEEEEAAKEEKEESDDEAAVEEEEEEKKPKT) is disordered. Residues 289 to 317 (VEEPMEEEEAAKEEKEESDDEAAVEEEEE) show a composition bias toward acidic residues. Residues serine 306 and serine 403 each carry the phosphoserine modification. Lysine 404 carries the post-translational modification N6-succinyllysine. Residue asparagine 445 is glycosylated (N-linked (GlcNAc...) asparagine). Serine 447 bears the Phosphoserine mark. An N6-acetyllysine modification is found at lysine 479. Residues asparagine 481 and asparagine 502 are each glycosylated (N-linked (GlcNAc...) asparagine). An N6-succinyllysine modification is found at lysine 633. Residues 750 to 804 (DPDAKVEEEPEEEPEETTEDTTEDTEQDDDEEMDAGADEEEQETSETSTAEKDEL) form a disordered region. A compositionally biased stretch (acidic residues) spans 757-793 (EEPEEEPEETTEDTTEDTEQDDDEEMDAGADEEEQET). The Prevents secretion from ER motif lies at 801 to 804 (KDEL).

Belongs to the heat shock protein 90 family. Homodimer; disulfide-linked. Component of an EIF2 complex at least composed of CELF1/CUGBP1, CALR, CALR3, EIF2S1, EIF2S2, HSP90B1 and HSPA5. Part of a large chaperone multiprotein complex comprising DNAJB11, HSP90B1, HSPA5, HYOU, PDIA2, PDIA4, PDIA6, PPIB, SDF2L1, UGGT1 and very small amounts of ERP29, but not, or at very low levels, CALR nor CANX. Interacts with AIMP1; regulates its retention in the endoplasmic reticulum. Hyperglycosylated form interacts with OS9; promoting its degradation by the endoplasmic reticulum associated degradation (ERAD). Interacts with CNPY3. This interaction is disrupted in the presence of ATP. Interacts with TLR4 and TLR9, but not with TLR3. Interacts with MZB1 in a calcium-dependent manner. Interacts with METTL23. Interacts with IL1B; the interaction facilitates cargo translocation into the ERGIC. Interacts with EIF2AK3. In terms of processing, phosphorylated by CK2. Post-translationally, N-glycosylated cotranslationally at Asn-217 by STT3A-containing OST-A complex: this glycosylation is constitutive. In response to various stress, 5 additional facultative sites (Asn-62, Asn-107, Asn-445, Asn-481 and Asn-502) can be glycosylated post-translationally by STT3B-containing OST-B complex, leading to a hyperglycosylated form that is degraded by the ER-associated degradation (ERAD) pathway. In normal conditions, the OST-A complex together with CCDC134 prevent glycosylation at facultative sites during protein folding, thereby preventing hyperglycosylation. Mechanistically, nascent HSP90B1 is tethered during translation to a specialized CCDC134-containing translocon that forms a microenvironment for its folding, in which STT3A associates with the SRT pseudosubstrate motif, and prevents access to facultative glycosylation sites until folding is completed, rendering its facultative sites inaccessible to the OST-B complex.

The protein localises to the endoplasmic reticulum lumen. Its subcellular location is the sarcoplasmic reticulum lumen. The protein resides in the melanosome. The catalysed reaction is ATP + H2O = ADP + phosphate + H(+). In terms of biological role, ATP-dependent chaperone involved in the processing of proteins in the endoplasmic reticulum, regulating their transport. Together with MESD, acts as a modulator of the Wnt pathway by promoting the folding of LRP6, a coreceptor of the canonical Wnt pathway. When associated with CNPY3, required for proper folding of Toll-like receptors. Promotes folding and trafficking of TLR4 to the cell surface. May participate in the unfolding of cytosolic leaderless cargos (lacking the secretion signal sequence) such as the interleukin 1/IL-1 to facilitate their translocation into the ERGIC (endoplasmic reticulum-Golgi intermediate compartment) and secretion; the translocation process is mediated by the cargo receptor TMED10. This chain is Endoplasmin (HSP90B1), found in Sus scrofa (Pig).